Here is a 678-residue protein sequence, read N- to C-terminus: uncharacterized protein (678 aa).

The segment at 1 to 26 is disordered; it reads MGVHFDDNANTTWEATDPGVSSDCDG. 9 helical membrane-spanning segments follow: residues 119–139, 245–265, 317–337, 340–360, 371–391, 405–425, 443–463, 475–495, and 519–539; these read LLLL…LIYP, SFPC…GGCT, AAVV…YDSI, YWIN…PPLL, ELFS…YVVW, IAKV…NVTF, GALT…VIQA, YFKI…LPGL, and AYLF…RWDF.

It is found in the vacuole membrane. This is an uncharacterized protein from Saccharomyces cerevisiae (strain ATCC 204508 / S288c) (Baker's yeast).